The sequence spans 106 residues: Large ribosomal subunit protein eL42 (106 aa).

Residues Ser-37–Pro-56 form a disordered region.

This sequence belongs to the eukaryotic ribosomal protein eL42 family.

The chain is Large ribosomal subunit protein eL42 (RPL44) from Pichia kudriavzevii (Yeast).